We begin with the raw amino-acid sequence, 247 residues long: tRNA pseudouridine synthase A (247 aa).

Residue aspartate 52 is the Nucleophile of the active site. Tyrosine 110 provides a ligand contact to substrate.

The protein belongs to the tRNA pseudouridine synthase TruA family. In terms of assembly, homodimer.

It carries out the reaction uridine(38/39/40) in tRNA = pseudouridine(38/39/40) in tRNA. In terms of biological role, formation of pseudouridine at positions 38, 39 and 40 in the anticodon stem and loop of transfer RNAs. This Hyphomonas neptunium (strain ATCC 15444) protein is tRNA pseudouridine synthase A.